The chain runs to 497 residues: MGLFSSTQPPQPTTVPSDEIIPLHFWNTALCMRGTVLDVSLKFDDVLDVSKLRDALNRLLEMEDWRQLGARLRMNVDGKLEYHIPAHFDASRPAFSMTNAQHETSIADHPLGARIPHTTGTPAIFPSPDELSPLLRSADAPKHIDDWTYSDRPQLCIHVITFSDATVITITWLHTLADVMGMTTILNAWTALLQGNREAIPKLQGFRSDPLTQLGQRTPAEKYMHFNRVFGRKEFLWFIGLNIFDRLWYRQEERRTICIPATCLRSLRQQASSEISATSSSEGGTVPFVSESDVLLGWWVRSLYGALGLRTDQTILVNNALNLRTSLHESFMSKDSAYMGNALCMSPTFLQGQQIADEPLGQIALRIRESVAEQRTPEQVEAMTALQMQTMEKTGYLALVGDPRMMLLSCSNWHKARLFDMDFSPAVLQSSAQSSSQNTQKKGKPSYVNGVQHSENSFRNVLSVIGKDAGRNWWLTGVLRTDAWAHVEEQVHKLGSS.

Catalysis depends on proton acceptor residues His174 and Asp422. A disordered region spans residues Ser430 to Val451.

This sequence belongs to the plant acyltransferase family. In terms of assembly, monomer.

The protein operates within secondary metabolite biosynthesis; terpenoid biosynthesis. Functionally, acetyltransferase; part of the gene cluster that mediates the biosynthesis of andrastins, meroterpenoid compounds that exhibit inhibitory activity against ras farnesyltransferase, suggesting that they could be promising leads for antitumor agents. The first step of the pathway is the synthesis of 3,5-dimethylorsellinic acid (DMOA) by the polyketide synthase adrD via condensation of one acetyl-CoA starter unit with 3 malonyl-CoA units and 2 methylations. DMAO is then converted to farnesyl-DMAO by the prenyltransferase adrG. The methyltransferase adrK catalyzes the methylation of the carboxyl group of farnesyl-DMAO to farnesyl-DMAO methyl ester which is further converted to epoxyfarnesyl-DMAO methyl ester by the FAD-dependent monooxygenase adrH. The terpene cyclase adrI then catalyzes the carbon skeletal rearrangement to generate the andrastin E, the first compound in the pathway having the andrastin scaffold, with the tetracyclic ring system. The post-cyclization tailoring enzymes adrF, adrE, adrJ, and adrA, are involved in the conversion of andrastin E into andrastin A. The short chain dehydrogenase adrF is responsible for the oxidation of the C-3 a hydroxyl group of andrastin E to yield the corresponding ketone, andrastin D. The ketoreductase adrE stereoselectively reduces the carbonyl moiety to reverse the stereochemistry of the C-3 position to yield andrastin F. The acetyltransferase adrJ is the acetyltransferase that attaches the acetyl group to the C-3 hydroxyl group of andrastin F to yield andrastin C. Finally, the cytochrome P450 monooxygenase adrA catalyzes two sequential oxidation reactions of the C-23 methyl group, to generate the corresponding alcohol andrastin B, and aldehyde andrastin A. This chain is Acetyltransferase adrJ, found in Penicillium rubens (strain ATCC 28089 / DSM 1075 / NRRL 1951 / Wisconsin 54-1255) (Penicillium chrysogenum).